The sequence spans 376 residues: uncharacterized protein (376 aa).

This sequence belongs to the mimivirus R1 family.

This is an uncharacterized protein from Acanthamoeba polyphaga (Amoeba).